The sequence spans 269 residues: 5'-nucleotidase SurE (269 aa).

Residues aspartate 11, aspartate 12, serine 43, and asparagine 101 each coordinate a divalent metal cation.

Belongs to the SurE nucleotidase family. A divalent metal cation serves as cofactor.

Its subcellular location is the cytoplasm. The enzyme catalyses a ribonucleoside 5'-phosphate + H2O = a ribonucleoside + phosphate. In terms of biological role, nucleotidase that shows phosphatase activity on nucleoside 5'-monophosphates. This chain is 5'-nucleotidase SurE, found in Synechococcus sp. (strain CC9605).